Consider the following 883-residue polypeptide: Receptor-like protein 40 (883 aa).

The signal sequence occupies residues M1–P21. At S22–A846 the chain is on the extracellular side. N-linked (GlcNAc...) asparagine glycosylation is found at N58, N91, and N109. LRR repeat units lie at residues F97–M121 and L122–F143. The N-linked (GlcNAc...) asparagine glycan is linked to N145. LRR repeat units follow at residues L146–L169, R170–L195, H197–N219, L220–L244, Q246–L267, T268–M291, F293–S316, S317–L340, N342–S364, L365–P390, S391–T412, L413–L437, R439–N462, and S463–I486. N-linked (GlcNAc...) asparagine glycosylation is found at N189, N207, N243, and N266. N-linked (GlcNAc...) asparagine glycans are attached at residues N305 and N312. Residue N352 is glycosylated (N-linked (GlcNAc...) asparagine). The N-linked (GlcNAc...) asparagine glycan is linked to N462. An LRR 17; degenerate repeat occupies N487–N506. N506 and N519 each carry an N-linked (GlcNAc...) asparagine glycan. LRR repeat units lie at residues R507–L528, S529–D552, P554–C576, A578–L600, P601–P624, F627–N651, T701–L724, K725–N747, L748–L772, and F774–G797. An N-linked (GlcNAc...) asparagine glycan is attached at N575. A glycan (N-linked (GlcNAc...) asparagine) is linked at N731. N779 is a glycosylation site (N-linked (GlcNAc...) asparagine). A helical membrane pass occupies residues V847–L867. Topologically, residues Y868–C883 are cytoplasmic.

The protein belongs to the RLP family.

It is found in the cell membrane. This is Receptor-like protein 40 from Arabidopsis thaliana (Mouse-ear cress).